A 341-amino-acid polypeptide reads, in one-letter code: Serpentine receptor class beta-3 (341 aa).

Residues 1–23 lie on the Extracellular side of the membrane; it reads MLETNDSVCELAYQLAYHPVYRS. The N-linked (GlcNAc...) asparagine glycan is linked to N5. Residues 24-44 form a helical membrane-spanning segment; the sequence is SQFWSMLVSSLSIPALIYFIT. The Cytoplasmic portion of the chain corresponds to 45-58; that stretch reads RKIFFLHFHGNLKC. A helical membrane pass occupies residues 59–79; sequence LLIVYFICNLLFSMALCFAFF. Residues 80 to 103 lie on the Extracellular side of the membrane; the sequence is YQFLIPFFVTSKCQLLINTTLFKW. The N-linked (GlcNAc...) asparagine glycan is linked to N97. A helical transmembrane segment spans residues 104–124; the sequence is GQICSFLLLTSSMLLPIGFSI. Topologically, residues 125–141 are cytoplasmic; sequence ERFVALGNAQKYESSRT. Residues 142-162 traverse the membrane as a helical segment; that stretch reads FLGPVIIFIIIAVDFSIIFSV. Topologically, residues 163 to 187 are extracellular; the sequence is YKNEPFTEGFYSFILVPSTTASQIN. The helical transmembrane segment at 188–208 threads the bilayer; that stretch reads MYFFVLLFVKIFNLLLNCILL. Residues 209-237 lie on the Cytoplasmic side of the membrane; sequence RIHKKIRIKYYSLSVRYEMEEILQSSKFT. The chain crosses the membrane as a helical span at residues 238–258; sequence FIIRFTHLLFFGFYVVVILFV. The Extracellular segment spans residues 259 to 276; it reads RIMGESFFNGTLNYSVAR. N-linked (GlcNAc...) asparagine glycosylation is found at N267 and N271. Residues 277–297 form a helical membrane-spanning segment; sequence GVFCTVPTYNLIIVIIGIKSL. Residues 298–341 lie on the Cytoplasmic side of the membrane; it reads RHLNLQRLNKVQSTVQIKSTGKEGSKNYEDIITNYWDSVSSRTP.

This sequence belongs to the nematode receptor-like protein srb family. In terms of tissue distribution, expressed throughout the head.

Its subcellular location is the cell membrane. It localises to the perikaryon. It is found in the cell projection. The protein resides in the dendrite. G-protein coupled receptor. This is Serpentine receptor class beta-3 from Caenorhabditis elegans.